The primary structure comprises 298 residues: Ribosomal RNA small subunit methyltransferase H (298 aa).

S-adenosyl-L-methionine contacts are provided by residues 38–40 (GGH), aspartate 57, phenylalanine 84, aspartate 100, and glutamine 107.

It belongs to the methyltransferase superfamily. RsmH family.

The protein resides in the cytoplasm. It carries out the reaction cytidine(1402) in 16S rRNA + S-adenosyl-L-methionine = N(4)-methylcytidine(1402) in 16S rRNA + S-adenosyl-L-homocysteine + H(+). In terms of biological role, specifically methylates the N4 position of cytidine in position 1402 (C1402) of 16S rRNA. The protein is Ribosomal RNA small subunit methyltransferase H of Acaryochloris marina (strain MBIC 11017).